Here is a 361-residue protein sequence, read N- to C-terminus: Dihydroorotate dehydrogenase (quinone) (361 aa).

Residues 69-73 (AGFDK) and Thr93 each bind FMN. Position 73 (Lys73) interacts with substrate. A substrate-binding site is contributed by 118–122 (NRLGF). The FMN site is built by Asn147 and Asn180. Asn180 contacts substrate. The Nucleophile role is filled by Ser183. Asn185 serves as a coordination point for substrate. Positions 221 and 249 each coordinate FMN. 250-251 (NT) contributes to the substrate binding site. FMN-binding positions include Gly271, Gly300, and 321–322 (YT).

This sequence belongs to the dihydroorotate dehydrogenase family. Type 2 subfamily. As to quaternary structure, monomer. FMN serves as cofactor.

It localises to the cell membrane. The catalysed reaction is (S)-dihydroorotate + a quinone = orotate + a quinol. It participates in pyrimidine metabolism; UMP biosynthesis via de novo pathway; orotate from (S)-dihydroorotate (quinone route): step 1/1. In terms of biological role, catalyzes the conversion of dihydroorotate to orotate with quinone as electron acceptor. The sequence is that of Dihydroorotate dehydrogenase (quinone) from Roseiflexus sp. (strain RS-1).